The chain runs to 75 residues: Large ribosomal subunit protein bL31 (75 aa).

The protein belongs to the bacterial ribosomal protein bL31 family. Type A subfamily. Part of the 50S ribosomal subunit.

In terms of biological role, binds the 23S rRNA. The sequence is that of Large ribosomal subunit protein bL31 from Pelodictyon phaeoclathratiforme (strain DSM 5477 / BU-1).